Reading from the N-terminus, the 253-residue chain is 3-deoxy-manno-octulosonate cytidylyltransferase (253 aa).

It belongs to the KdsB family.

Its subcellular location is the cytoplasm. The enzyme catalyses 3-deoxy-alpha-D-manno-oct-2-ulosonate + CTP = CMP-3-deoxy-beta-D-manno-octulosonate + diphosphate. It participates in nucleotide-sugar biosynthesis; CMP-3-deoxy-D-manno-octulosonate biosynthesis; CMP-3-deoxy-D-manno-octulosonate from 3-deoxy-D-manno-octulosonate and CTP: step 1/1. It functions in the pathway bacterial outer membrane biogenesis; lipopolysaccharide biosynthesis. In terms of biological role, activates KDO (a required 8-carbon sugar) for incorporation into bacterial lipopolysaccharide in Gram-negative bacteria. The sequence is that of 3-deoxy-manno-octulosonate cytidylyltransferase from Edwardsiella ictaluri (strain 93-146).